A 523-amino-acid polypeptide reads, in one-letter code: MGKTMWARAVFLCFSVGTLLWQEVLTRRIPVDTGQCGLPKSQEDLNSFLWTVRRHPPAYLFGTIHVPYTRVWDFIPQNSKKAFHDSNSVYFELDLTDPYTISALANCQMLPQGENLQDVLPRDLYRRLKRHLEYVKHMMPHWMTPDQRGKGLYADYLFNAIAGNWERKRPVWVMLMVNSLTEADIRSRGVPVLDLYLAQEADRMKKKTGAVERVEEQCHPLNRLNLSQVLFALNQTLLQHESLRAGSFQAPYTTEDLIKHYNCGDLNAVIFSHDSSQLPNFINVTLPPHEQVTAQEIDIYFRQELIYKRNERMARRVIALLKENKDKSFFFAFGAGHFLGNNTVIDVLRQNGYEVEHTPAGQTFTAAKPKTNPTSDDSMATDSPAMKYFDHVPATASYFGESDEEMLPPHLLLPDSISQLEEFGKQNSWHRKHYRNQRPRQFNDLWVRLDDSTTTLPSNTRNTNGEQSAESLVWLPEQDHHNYLDVKLSHSQSNSSPKCLSASPAFLYTLVTLCLITTMRTRS.

The signal sequence occupies residues 1–26 (MGKTMWARAVFLCFSVGTLLWQEVLT). The Extracellular segment spans residues 27–499 (RRIPVDTGQC…HSQSNSSPKC (473 aa)). N-linked (GlcNAc...) asparagine glycosylation is found at N225, N234, N283, and N341. Residues 500-516 (LSASPAFLYTLVTLCLI) form a helical membrane-spanning segment. The Cytoplasmic segment spans residues 517-523 (TTMRTRS).

This sequence belongs to the TIKI family. The cofactor is Mn(2+). It depends on Co(2+) as a cofactor.

It is found in the cell membrane. Metalloprotease that acts as a negative regulator of the Wnt signaling pathway by mediating the cleavage of the N-terminal residues of a subset of Wnt proteins. Following cleavage, Wnt proteins become oxidized and form large disulfide-bond oligomers, leading to their inactivation. Able to cleave wnt8. Required for head formation. This chain is Metalloprotease TIKI2 (trabd2b), found in Xenopus tropicalis (Western clawed frog).